The following is a 182-amino-acid chain: Rhodanese-like domain-containing protein 15, chloroplastic (182 aa).

The transit peptide at 1–65 (METTAFNTTS…TTSRGNVAAE (65 aa)) directs the protein to the chloroplast. The region spanning 82-182 (AQAGYRYLDV…WTENELPVEE (101 aa)) is the Rhodanese domain. C142 functions as the Cysteine persulfide intermediate in the catalytic mechanism.

It localises to the plastid. The protein resides in the chloroplast. Its subcellular location is the thylakoid. This is Rhodanese-like domain-containing protein 15, chloroplastic (STR15) from Arabidopsis thaliana (Mouse-ear cress).